Reading from the N-terminus, the 91-residue chain is Large ribosomal subunit protein eL43 (91 aa).

A C4-type zinc finger spans residues 39 to 60 (CSFCGKEAMKRKATGIWNCAKC).

This sequence belongs to the eukaryotic ribosomal protein eL43 family.

The chain is Large ribosomal subunit protein eL43 from Caenorhabditis elegans.